The chain runs to 553 residues: Methionine--tRNA ligase (553 aa).

Residues 12-22 (PYANSQLHLGH) carry the 'HIGH' region motif. Residues C144, C147, C157, and C160 each coordinate Zn(2+). Residues 332–336 (KFSKS) carry the 'KMSKS' region motif. K335 is an ATP binding site.

This sequence belongs to the class-I aminoacyl-tRNA synthetase family. MetG type 1 subfamily. In terms of assembly, monomer. The cofactor is Zn(2+).

Its subcellular location is the cytoplasm. It carries out the reaction tRNA(Met) + L-methionine + ATP = L-methionyl-tRNA(Met) + AMP + diphosphate. In terms of biological role, is required not only for elongation of protein synthesis but also for the initiation of all mRNA translation through initiator tRNA(fMet) aminoacylation. This chain is Methionine--tRNA ligase, found in Dehalococcoides mccartyi (strain ATCC BAA-2100 / JCM 16839 / KCTC 5957 / BAV1).